Reading from the N-terminus, the 437-residue chain is ATP-dependent RNA helicase RhlB (437 aa).

The Q motif motif lies at 9–37 (KKFADFPLHKEVQQALNEVGFEFCTPIQA). A Helicase ATP-binding domain is found at 40 to 219 (LPILLAKKDI…YDHMNEPEKV (180 aa)). ATP is bound at residue 53–60 (AQTGTGKT). The short motif at 165–168 (DEAD) is the DEAD box element. The region spanning 243-390 (KMPLLLSLLE…VTSYDSEALL (148 aa)) is the Helicase C-terminal domain. Residues 394-437 (PAPKRIHRKPSSHSRNSRDRSGSRPQGGHRGNAPRRHDKTRRHS) form a disordered region. Residues 425-437 (NAPRRHDKTRRHS) show a composition bias toward basic residues.

Belongs to the DEAD box helicase family. RhlB subfamily. In terms of assembly, component of the RNA degradosome, which is a multiprotein complex involved in RNA processing and mRNA degradation.

The protein localises to the cytoplasm. It catalyses the reaction ATP + H2O = ADP + phosphate + H(+). DEAD-box RNA helicase involved in RNA degradation. Has RNA-dependent ATPase activity and unwinds double-stranded RNA. This Shewanella piezotolerans (strain WP3 / JCM 13877) protein is ATP-dependent RNA helicase RhlB.